A 483-amino-acid polypeptide reads, in one-letter code: Probable apyrase 3 (483 aa).

Over 1–29 the chain is Cytoplasmic; the sequence is MTPETDALKVQILPKHQSLPYTVTKAKSK. A helical; Signal-anchor for type II membrane protein membrane pass occupies residues 30–50; it reads SLILLVVVSVTITLGLLLYVF. Residues 51–483 are Extracellular-facing; that stretch reads NSNSVISSGS…NGKSRKYLGF (433 aa). Residue 72 to 82 participates in ATP binding; it reads VLIDAGSSGTR. E195 serves as the catalytic Proton acceptor. 219 to 229 provides a ligand contact to ATP; that stretch reads GIVELGGASAQ. Residues N250, N281, N305, and N326 are each glycosylated (N-linked (GlcNAc...) asparagine).

This sequence belongs to the GDA1/CD39 NTPase family. Ca(2+) is required as a cofactor. In terms of tissue distribution, expressed in the initiation zone of lateral root and in the lateral root tip, the adaxial junction of lateral shoots with the stems, and in the abscission zone of flower organs. Not expressed in the rosette leaves.

It localises to the membrane. It carries out the reaction a ribonucleoside 5'-triphosphate + 2 H2O = a ribonucleoside 5'-phosphate + 2 phosphate + 2 H(+). Its function is as follows. Catalyzes the hydrolysis of phosphoanhydride bonds of nucleoside tri- and di-phosphates. The polypeptide is Probable apyrase 3 (APY3) (Arabidopsis thaliana (Mouse-ear cress)).